The sequence spans 248 residues: Killer cell lectin-like receptor subfamily I member 1 (248 aa).

Residues 1–80 (MLHSKRREYT…RQGPKSTVWR (80 aa)) are Cytoplasmic-facing. Short sequence motifs (ITIM motif) lie at residues 16 to 21 (VTYTEL) and 47 to 52 (LKYGEL). Residues 81–101 (VVTGMLGALCVVLMTTTGILL) traverse the membrane as a helical; Signal-anchor for type II membrane protein segment. The Extracellular portion of the chain corresponds to 102-248 (PKLFSSQEEQ…KKSYICEFNI (147 aa)). Cystine bridges form between cysteine 132–cysteine 145, cysteine 161–cysteine 244, and cysteine 223–cysteine 236. A C-type lectin domain is found at 139–245 (FGNNFYCVFK…CSAKKSYICE (107 aa)). 3 N-linked (GlcNAc...) asparagine glycosylation sites follow: asparagine 197, asparagine 214, and asparagine 220.

In terms of assembly, heterodimer with KLRE1. Interacts with PTPN6. Expressed in natural killer (NK) cells.

It is found in the cell membrane. In terms of biological role, lectin-like receptor for natural killer (NK) cells. Heterodimer formation with KLRE1 mediates inhibition of NK cell cytolytic activity. The protein is Killer cell lectin-like receptor subfamily I member 1 of Mus musculus (Mouse).